The following is a 799-amino-acid chain: Pentatricopeptide repeat-containing protein At2g26790, mitochondrial (799 aa).

The transit peptide at 1-27 (MRFSPTFFLLSQLRLTRRRAATSSRFY) directs the protein to the mitochondrion. 18 PPR repeats span residues 145–179 (LIRV…DCVV), 180–214 (DIKA…GLCA), 215–250 (NEYT…GYKT), 251–278 (FING…KYLA), 282–316 (LRAV…GFGL), 317–351 (DVYA…GLKV), 352–386 (NCVI…NIFL), 387–421 (DRVC…GIVP), 422–456 (DVIN…GMSP), 457–491 (DLIT…GPKP), 492–522 (NAVT…LEQK), 523–553 (CPEN…LEYP), 555–589 (RKSV…RVEP), 590–624 (GRSM…GLIP), 625–659 (DLFT…GIKP), 660–695 (DVVT…KASE), 708–742 (DVVC…GLEP), and 743–777 (DMVA…YNIP).

Belongs to the PPR family. P subfamily.

It localises to the mitochondrion. In Arabidopsis thaliana (Mouse-ear cress), this protein is Pentatricopeptide repeat-containing protein At2g26790, mitochondrial.